The primary structure comprises 152 residues: MKKRLFVLSLILLVALDQLSKFWIVSHIALGEVKPFIPGIVSLTYLQNNGAAFSILQDQQWFFVVITVLVIGYAIYYLATHPHLNIWKQLALLLIISGGIGNFIDRLRLAYVIDMIHLDFVDFAIFNVADSYLTVGVILLVICLWKEEDYGN.

The next 3 membrane-spanning stretches (helical) occupy residues 5 to 25 (LFVL…FWIV), 61 to 81 (WFFV…LATH), and 84 to 104 (LNIW…GNFI). Active-site residues include aspartate 114 and aspartate 130. The chain crosses the membrane as a helical span at residues 125–145 (IFNVADSYLTVGVILLVICLW).

Belongs to the peptidase A8 family.

It is found in the cell membrane. The enzyme catalyses Release of signal peptides from bacterial membrane prolipoproteins. Hydrolyzes -Xaa-Yaa-Zaa-|-(S,diacylglyceryl)Cys-, in which Xaa is hydrophobic (preferably Leu), and Yaa (Ala or Ser) and Zaa (Gly or Ala) have small, neutral side chains.. It functions in the pathway protein modification; lipoprotein biosynthesis (signal peptide cleavage). Its function is as follows. This protein specifically catalyzes the removal of signal peptides from prolipoproteins. The sequence is that of Lipoprotein signal peptidase from Streptococcus pyogenes serotype M18 (strain MGAS8232).